The sequence spans 277 residues: Large ribosomal subunit protein uL2 (277 aa).

A disordered region spans residues 216 to 277 (RRPHNRGVAM…IIRRRKVGKG (62 aa)).

This sequence belongs to the universal ribosomal protein uL2 family. In terms of assembly, part of the 50S ribosomal subunit. Forms a bridge to the 30S subunit in the 70S ribosome.

In terms of biological role, one of the primary rRNA binding proteins. Required for association of the 30S and 50S subunits to form the 70S ribosome, for tRNA binding and peptide bond formation. It has been suggested to have peptidyltransferase activity; this is somewhat controversial. Makes several contacts with the 16S rRNA in the 70S ribosome. This is Large ribosomal subunit protein uL2 from Acidiphilium cryptum (strain JF-5).